We begin with the raw amino-acid sequence, 545 residues long: MSNNGLDIQDKPPAPPMRNTSTMIGAGSKDAGTLNHGSKPLPPNPEEKKKKDRFYRSILPGDKTNKKKEKERPEISLPSDFEHTIHVGFDAVTGEFTGMPEQWARLLQTSNITKSEQKKNPQAVLDVLEFYNSKKTSNSQKYMSFTDKSAEDYNSSNALNVKAVSETPAVPPVSEDEDDDDDDATPPPVIAPRPEHTKSVYTRSVIEPLPVTPTRDVATSPISPTENNTTPPDALTRNTEKQKKKPKMSDEEILEKLRSIVSVGDPKKKYTRFEKIGQGASGTVYTAMDVATGQEVAIKQMNLQQQPKKELIINEILVMRENKNPNIVNYLDSYLVGDELWVVMEYLAGGSLTDVVTETCMDEGQIAAVCRECLQALEFLHSNQVIHRDIKSDNILLGMDGSVKLTDFGFCAQITPEQSKRSTMVGTPYWMAPEVVTRKAYGPKVDIWSLGIMAIEMIEGEPPYLNENPLRALYLIATNGTPELQNPEKLSAIFRDFLNRCLEMDVEKRGSAKELLQHQFLKIAKPLSSLTPLIAAAKEATKNNH.

A disordered region spans residues 1 to 77; sequence MSNNGLDIQD…KEKERPEISL (77 aa). Serine 2 is modified (N-acetylserine). Serine 21 is modified (phosphoserine; by PKB and autocatalysis). Serine 57 bears the Phosphoserine; by autocatalysis mark. Residues 68–77 are compositionally biased toward basic and acidic residues; it reads KEKERPEISL. Positions 70–140 are autoregulatory region; sequence KERPEISLPS…YNSKKTSNSQ (71 aa). One can recognise a CRIB domain in the interval 75–88; that stretch reads ISLPSDFEHTIHVG. Residues 75–105 form a GTPase-binding region; the sequence is ISLPSDFEHTIHVGFDAVTGEFTGMPEQWAR. At threonine 84 the chain carries Phosphothreonine; by OXSR1. Serine 115 is modified (phosphoserine). Phosphotyrosine occurs at positions 131 and 142. The residue at position 144 (serine 144) is a Phosphoserine; by autocatalysis. At serine 149 the chain carries Phosphoserine. Position 153 is a phosphotyrosine; by JAK2 (tyrosine 153). Residues 159–198 are disordered; it reads LNVKAVSETPAVPPVSEDEDDDDDDATPPPVIAPRPEHTK. The residue at position 174 (serine 174) is a Phosphoserine. The span at 174–184 shows a compositional bias: acidic residues; the sequence is SEDEDDDDDDA. Position 185 is a phosphothreonine (threonine 185). Position 199 is a phosphoserine; by autocatalysis (serine 199). Tyrosine 201 is subject to Phosphotyrosine; by JAK2. Phosphoserine is present on serine 204. Positions 211-251 are disordered; it reads VTPTRDVATSPISPTENNTTPPDALTRNTEKQKKKPKMSDE. Phosphothreonine occurs at positions 212 and 219. Residues serine 220 and serine 223 each carry the phosphoserine modification. Positions 220 to 231 are enriched in polar residues; it reads SPISPTENNTTP. 3 positions are modified to phosphothreonine: threonine 225, threonine 229, and threonine 230. One can recognise a Protein kinase domain in the interval 270-521; sequence YTRFEKIGQG…AKELLQHQFL (252 aa). An ATP-binding site is contributed by 276-284; it reads IGQGASGTV. Tyrosine 285 is modified (phosphotyrosine; by JAK2). ATP-binding positions include lysine 299 and 345 to 347; that span reads EYL. Residue aspartate 389 is the Proton acceptor of the active site. The residue at position 423 (threonine 423) is a Phosphothreonine; by autocatalysis, BRSK2 and PDPK1.

This sequence belongs to the protein kinase superfamily. STE Ser/Thr protein kinase family. STE20 subfamily. Homodimer; homodimerization results in autoinhibition. Active as monomer. Interacts with GIT1. Component of cytoplasmic complexes, which also contains PXN, ARHGEF7 and GIT1. Interacts with NISCH. Interacts with DVL1; mediates the formation of a DVL1, MUSK and PAK1 ternary complex involved in AChR clustering. Binds to the caspase-cleaved p110 isoform of CDC2L1 and CDC2L2, p110C, but not the full-length proteins. Interacts with ARHGEF7. Interacts tightly with GTP-bound but not GDP-bound CDC42/P21 and RAC1. Interacts with SCRIB. Interacts with PDPK1. Interacts (via kinase domain) with RAF1. Interacts with NCK1 and NCK2. Interacts with TBCB. Interacts with BRSK2. Interacts with SNAI1. Interacts with CIB1 isoform 2. Interacts with CIB1 (via N-terminal region); the interaction is direct, promotes PAK1 activity and occurs in a calcium-dependent manner. Interacts with INPP5K. Interacts with gamma-tubulin. Interacts with RHOU; the interaction promotes PAK1 activation. The cofactor is Mg(2+). Autophosphorylated in trans, meaning that in a dimer, one kinase molecule phosphorylates the other one. Activated by autophosphorylation at Thr-423 in response to a conformation change, triggered by interaction with GTP-bound CDC42 or RAC1. Activated by phosphorylation at Thr-423 by BRSK2 and by PDPK1. Phosphorylated by JAK2 in response to PRL; this increases PAK1 kinase activity. Phosphorylated at Ser-21 by PKB/AKT; this reduces interaction with NCK1 and association with focal adhesion sites. Upon DNA damage, phosphorylated at Thr-212 and translocates to the nucleoplasm. Phosphorylated at tyrosine residues, which can be enhanced by NTN1. In terms of tissue distribution, overexpressed in gastric cancer cells and tissues (at protein level).

It is found in the cytoplasm. The protein resides in the cell junction. The protein localises to the focal adhesion. Its subcellular location is the cell projection. It localises to the lamellipodium. It is found in the cell membrane. The protein resides in the ruffle membrane. The protein localises to the invadopodium. Its subcellular location is the nucleus. It localises to the nucleoplasm. It is found in the chromosome. The protein resides in the cytoskeleton. The protein localises to the microtubule organizing center. Its subcellular location is the centrosome. It catalyses the reaction L-seryl-[protein] + ATP = O-phospho-L-seryl-[protein] + ADP + H(+). The catalysed reaction is L-threonyl-[protein] + ATP = O-phospho-L-threonyl-[protein] + ADP + H(+). Activated by binding small G proteins. Binding of GTP-bound CDC42 or RAC1 to the autoregulatory region releases monomers from the autoinhibited dimer, and enables activation by phosphorylation of Thr-423. Phosphorylation of Thr-84 by OXSR1 inhibits activation. Functionally, protein kinase involved in intracellular signaling pathways downstream of integrins and receptor-type kinases that plays an important role in cytoskeleton dynamics, in cell adhesion, migration, proliferation, apoptosis, mitosis, and in vesicle-mediated transport processes. Can directly phosphorylate BAD and protects cells against apoptosis. Activated by interaction with CDC42 and RAC1. Functions as a GTPase effector that links the Rho-related GTPases CDC42 and RAC1 to the JNK MAP kinase pathway. Phosphorylates and activates MAP2K1, and thereby mediates activation of downstream MAP kinases. Involved in the reorganization of the actin cytoskeleton, actin stress fibers and of focal adhesion complexes. Phosphorylates the tubulin chaperone TBCB and thereby plays a role in the regulation of microtubule biogenesis and organization of the tubulin cytoskeleton. Plays a role in the regulation of insulin secretion in response to elevated glucose levels. Part of a ternary complex that contains PAK1, DVL1 and MUSK that is important for MUSK-dependent regulation of AChR clustering during the formation of the neuromuscular junction (NMJ). Activity is inhibited in cells undergoing apoptosis, potentially due to binding of CDC2L1 and CDC2L2. Phosphorylates MYL9/MLC2. Phosphorylates RAF1 at 'Ser-338' and 'Ser-339' resulting in: activation of RAF1, stimulation of RAF1 translocation to mitochondria, phosphorylation of BAD by RAF1, and RAF1 binding to BCL2. Phosphorylates SNAI1 at 'Ser-246' promoting its transcriptional repressor activity by increasing its accumulation in the nucleus. In podocytes, promotes NR3C2 nuclear localization. Required for atypical chemokine receptor ACKR2-induced phosphorylation of LIMK1 and cofilin (CFL1) and for the up-regulation of ACKR2 from endosomal compartment to cell membrane, increasing its efficiency in chemokine uptake and degradation. In synapses, seems to mediate the regulation of F-actin cluster formation performed by SHANK3, maybe through CFL1 phosphorylation and inactivation. Plays a role in RUFY3-mediated facilitating gastric cancer cells migration and invasion. In response to DNA damage, phosphorylates MORC2 which activates its ATPase activity and facilitates chromatin remodeling. In neurons, plays a crucial role in regulating GABA(A) receptor synaptic stability and hence GABAergic inhibitory synaptic transmission through its role in F-actin stabilization. In hippocampal neurons, necessary for the formation of dendritic spines and excitatory synapses; this function is dependent on kinase activity and may be exerted by the regulation of actomyosin contractility through the phosphorylation of myosin II regulatory light chain (MLC). Along with GIT1, positively regulates microtubule nucleation during interphase. Phosphorylates FXR1, promoting its localization to stress granules and activity. Phosphorylates ILK on 'Thr-173' and 'Ser-246', promoting nuclear export of ILK. This Homo sapiens (Human) protein is Serine/threonine-protein kinase PAK 1.